Here is a 227-residue protein sequence, read N- to C-terminus: Cytochrome c oxidase subunit 2 (227 aa).

Residues 1–26 (MATWSNLSIQDGASPLMEQLSFFHDD) are Mitochondrial intermembrane-facing. The helical transmembrane segment at 27 to 48 (HTMVVLLITVIVGYALSYMLFN) threads the bilayer. Over 49–62 (AYTNRNMLHGHLIE) the chain is Mitochondrial matrix. A helical transmembrane segment spans residues 63–82 (TIWTALPAITLIFIALPSLR). Residues 83–227 (LLYLLDDSVD…LFIKWLSKMI (145 aa)) are Mitochondrial intermembrane-facing. The Cu cation site is built by histidine 161, cysteine 196, glutamate 198, cysteine 200, histidine 204, and methionine 207. Glutamate 198 provides a ligand contact to Mg(2+).

It belongs to the cytochrome c oxidase subunit 2 family. In terms of assembly, component of the cytochrome c oxidase (complex IV, CIV), a multisubunit enzyme composed of a catalytic core of 3 subunits and several supernumerary subunits. The complex exists as a monomer or a dimer and forms supercomplexes (SCs) in the inner mitochondrial membrane with ubiquinol-cytochrome c oxidoreductase (cytochrome b-c1 complex, complex III, CIII). It depends on Cu cation as a cofactor.

It is found in the mitochondrion inner membrane. The catalysed reaction is 4 Fe(II)-[cytochrome c] + O2 + 8 H(+)(in) = 4 Fe(III)-[cytochrome c] + 2 H2O + 4 H(+)(out). In terms of biological role, component of the cytochrome c oxidase, the last enzyme in the mitochondrial electron transport chain which drives oxidative phosphorylation. The respiratory chain contains 3 multisubunit complexes succinate dehydrogenase (complex II, CII), ubiquinol-cytochrome c oxidoreductase (cytochrome b-c1 complex, complex III, CIII) and cytochrome c oxidase (complex IV, CIV), that cooperate to transfer electrons derived from NADH and succinate to molecular oxygen, creating an electrochemical gradient over the inner membrane that drives transmembrane transport and the ATP synthase. Cytochrome c oxidase is the component of the respiratory chain that catalyzes the reduction of oxygen to water. Electrons originating from reduced cytochrome c in the intermembrane space (IMS) are transferred via the dinuclear copper A center (CU(A)) of subunit 2 and heme A of subunit 1 to the active site in subunit 1, a binuclear center (BNC) formed by heme A3 and copper B (CU(B)). The BNC reduces molecular oxygen to 2 water molecules using 4 electrons from cytochrome c in the IMS and 4 protons from the mitochondrial matrix. The chain is Cytochrome c oxidase subunit 2 (COII) from Schistocerca gregaria (Desert locust).